Consider the following 1085-residue polypeptide: MPKRTDISNILLIGSGPIVIGQACEFDYSGTQSCKTLKSLGYRVILINSNPATVMTDPEFSHQTYIQPITPENIATIIEKEKIDAILPTMGGQTALNAVMQMHQKGMLEGVELLGAKIEAIKKGEDRQAFKEAMLKIGMDLPKGRYAYTELEALEAINEIGFPAIIRASFTLAGGGSGVAYNIEEFQELAKNALDASPINEILIEESLLGWKEYEMEVIRDSKDNCIIVCCIENIDPMGVHTGDSITIAPSLTLTDKEYQRMRDASFAILREIGVDTGGSNVQFAIHPETLRMVVIEMNPRVSRSSALASKATGFPIAKVATMLAVGFSLDEIQNDITNTPASFEPSLDYIVVKIPRFAFEKFAGVSSTLGTSMKSIGEVMAIGGNFLEALQKALCSLENNWLGFESLSKDLEAIKKEIRRPNPKRLLYIADAFRLGVCVDEVFELCQIDRWFLSQIQKLVEVEESINSSVLTDAKKLRGLKNLGFSDARIAAKIKENENLEVSPFEVELARSNLQIVPNFEEVDTCAAEFLSLTPYLYSTYAPNPLPPIENKQEKKEKKILIIGSGPNRIGQGIEFDYCCVHASLALKDLNIKSVMFNCNPETVSTDYDTSDTLYFEPIHFECVKSIIQRERVDGIIVHFGGQTPLKLAKDLAKMQAPIIGTPFKVIDIAEDREKFSLFLKELDIKQPKNGMAKSVDEAYSIANVIGFPIIVRPSYVLGGQHMQILENIEELRHYLESVTHALEISPKNPLLIDKFLEKAVELDVDAICDKKEVYIAGILQHIEEAGIHSGDSACFIPSTLSPEILDEIERVSAKIALHLGVVGLLNIQFAVHQNSLYLIEVNPRASRTVPFLSKALGVPLAKVATRVMVLEDLKEALKFYDKKNIVGYSKGVYKPKMPHFVALKEAVFPFNKLYGSDLILGPEMKSTGEVMGIARSLGLAFFKAQTACFNPIKNKGLIFVSIKDKDKEEACVLMKRLVQLGFELCATEGTHKALEKAGVKSLKVLKISEGRPNIMDLMMNGEISMAINTSDHKSQDDAKLIRASVLKNHVSYFTTLSTIEVLLLALEESSKEDELLALQDYLK.

A carboxyphosphate synthetic domain region spans residues 1–399 (MPKRTDISNI…ALQKALCSLE (399 aa)). Arginine 127, arginine 167, glycine 174, glutamate 206, leucine 208, glutamate 213, glycine 239, valine 240, histidine 241, glutamine 283, and glutamate 297 together coordinate ATP. The 196-residue stretch at 131–326 (KEAMLKIGMD…IAKVATMLAV (196 aa)) folds into the ATP-grasp 1 domain. Mg(2+) contacts are provided by glutamine 283, glutamate 297, and asparagine 299. 3 residues coordinate Mn(2+): glutamine 283, glutamate 297, and asparagine 299. The interval 400-552 (NNWLGFESLS…APNPLPPIEN (153 aa)) is oligomerization domain. Residues 553 to 951 (KQEKKEKKIL…AFFKAQTACF (399 aa)) form a carbamoyl phosphate synthetic domain region. The ATP-grasp 2 domain maps to 678–871 (SLFLKELDIK…LAKVATRVMV (194 aa)). Residues arginine 714, lysine 756, leucine 758, glutamate 763, glycine 788, isoleucine 789, histidine 790, serine 791, glutamine 830, and glutamate 842 each contribute to the ATP site. 3 residues coordinate Mg(2+): glutamine 830, glutamate 842, and asparagine 844. Residues glutamine 830, glutamate 842, and asparagine 844 each contribute to the Mn(2+) site. The 134-residue stretch at 952 to 1085 (NPIKNKGLIF…ELLALQDYLK (134 aa)) folds into the MGS-like domain. Residues 952–1085 (NPIKNKGLIF…ELLALQDYLK (134 aa)) are allosteric domain.

This sequence belongs to the CarB family. As to quaternary structure, composed of two chains; the small (or glutamine) chain promotes the hydrolysis of glutamine to ammonia, which is used by the large (or ammonia) chain to synthesize carbamoyl phosphate. Tetramer of heterodimers (alpha,beta)4. Mg(2+) serves as cofactor. Mn(2+) is required as a cofactor.

It carries out the reaction hydrogencarbonate + L-glutamine + 2 ATP + H2O = carbamoyl phosphate + L-glutamate + 2 ADP + phosphate + 2 H(+). The catalysed reaction is hydrogencarbonate + NH4(+) + 2 ATP = carbamoyl phosphate + 2 ADP + phosphate + 2 H(+). Its pathway is amino-acid biosynthesis; L-arginine biosynthesis; carbamoyl phosphate from bicarbonate: step 1/1. It functions in the pathway pyrimidine metabolism; UMP biosynthesis via de novo pathway; (S)-dihydroorotate from bicarbonate: step 1/3. Large subunit of the glutamine-dependent carbamoyl phosphate synthetase (CPSase). CPSase catalyzes the formation of carbamoyl phosphate from the ammonia moiety of glutamine, carbonate, and phosphate donated by ATP, constituting the first step of 2 biosynthetic pathways, one leading to arginine and/or urea and the other to pyrimidine nucleotides. The large subunit (synthetase) binds the substrates ammonia (free or transferred from glutamine from the small subunit), hydrogencarbonate and ATP and carries out an ATP-coupled ligase reaction, activating hydrogencarbonate by forming carboxy phosphate which reacts with ammonia to form carbamoyl phosphate. This Helicobacter pylori (strain ATCC 700392 / 26695) (Campylobacter pylori) protein is Carbamoyl phosphate synthase large chain.